A 470-amino-acid polypeptide reads, in one-letter code: MSVQPVAVYALKVPAGGALIPAVPDAAAMFRVSMAAIDPDEEPDFDGHDTNQRPRATLRIVRAPPGLDLEDDSDDDYEDVDSDEESDDEEPNGGPSDKEKARKLKELAALKEMEEAMDEDDEDEDEDEDGEFDLKAAISKLVKGKGPATDSDEDDEEDEGLELDEMVVCTLDTEKNLQQPLDITVSEDERVFFKVTGTHTVYLTGNYVMPIDPHFHGEDEDEEDEDDYDLSPDEDELALDLMGDDDNESDELDGLENPRITEVDSDEEPPKLVDTKGKNKRSAPADEEKPAKQANGEESLSKKQQKKLKKNNGDAAAVEQKKEAKEGKEAKKVQFAKNLEQGPTPSGQDKKPAEQTTGTLGVKEVKGVKIDDKKLGKGPAAKAGNTVAMRYIGKLEDGKVFDANKKGKPFTFKLGKGEVIKGWDIGVAGMAVGGERRISIPPHLAYGKKALPGIPGNSKLIFDVKLLEIK.

Disordered regions lie at residues 40 to 101 (DEEP…KEKA), 114 to 163 (EEAM…GLEL), and 210 to 358 (PIDP…QTTG). Composition is skewed to acidic residues over residues 68–91 (DLED…DEEP), 115–131 (EAMD…EDGE), 150–163 (DSDE…GLEL), and 218–254 (EDED…ELDG). 2 stretches are compositionally biased toward basic and acidic residues: residues 268–291 (EPPK…EKPA) and 319–332 (EQKK…EAKK). The 87-residue stretch at 384-470 (GNTVAMRYIG…IFDVKLLEIK (87 aa)) folds into the PPIase FKBP-type domain.

Belongs to the FKBP-type PPIase family. FKBP3/4 subfamily. As to quaternary structure, binds to histones H3 and H4.

The protein localises to the nucleus. The catalysed reaction is [protein]-peptidylproline (omega=180) = [protein]-peptidylproline (omega=0). With respect to regulation, inhibited by both FK506 and rapamycin. Functionally, PPIase that acts as a histone chaperone. Histone proline isomerase that increases the rate of cis-trans isomerization at prolines on the histone H3 N-terminal tail. Proline isomerization influences H3 methylation thereby regulating gene expression. This is FK506-binding protein 4 (fpr4) from Aspergillus oryzae (strain ATCC 42149 / RIB 40) (Yellow koji mold).